Reading from the N-terminus, the 439-residue chain is 5-hydroxybenzimidazole synthase (439 aa).

Residues M96, Y125, H164, 187–189, 228–231, and E267 each bind substrate; these read SKG and NGIR. A Zn(2+)-binding site is contributed by H271. Y294 lines the substrate pocket. Residue H335 coordinates Zn(2+). [4Fe-4S] cluster is bound by residues C410, C413, and C417.

It belongs to the ThiC family. 5-hydroxybenzimidazole synthase subfamily. In terms of assembly, homodimer. [4Fe-4S] cluster is required as a cofactor.

It carries out the reaction 5-amino-1-(5-phospho-beta-D-ribosyl)imidazole + AH2 + S-adenosyl-L-methionine = 5-hydroxybenzimidazole + 5'-deoxyadenosine + formate + L-methionine + A + NH4(+) + phosphate + 2 H(+). In terms of biological role, catalyzes the conversion of aminoimidazole ribotide (AIR) to 5-hydroxybenzimidazole (5-HBI) in a radical S-adenosyl-L-methionine (SAM)-dependent reaction. Is thus involved in the anaerobic biosynthesis of the benzimidazole lower axial ligand of the cobamide produced by D.autotrophicum. The chain is 5-hydroxybenzimidazole synthase from Desulforapulum autotrophicum (strain ATCC 43914 / DSM 3382 / VKM B-1955 / HRM2) (Desulfobacterium autotrophicum).